A 181-amino-acid polypeptide reads, in one-letter code: Inner membrane-spanning protein YciB (181 aa).

The next 5 helical transmembrane spans lie at 19–39, 50–70, 80–100, 118–138, and 148–168; these read FFDI…QLIA, MHLI…IFHD, IVYA…KPIL, LTWY…YVAF, and FKVF…VVYL.

The protein belongs to the YciB family.

It is found in the cell inner membrane. Plays a role in cell envelope biogenesis, maintenance of cell envelope integrity and membrane homeostasis. This is Inner membrane-spanning protein YciB from Shewanella amazonensis (strain ATCC BAA-1098 / SB2B).